A 510-amino-acid polypeptide reads, in one-letter code: GTPase Der (510 aa).

2 EngA-type G domains span residues 3 to 167 (LKLA…GPEA) and 230 to 405 (IRLA…KDWT). GTP-binding positions include 9–16 (GRPNVGKS), 56–60 (DTAGF), 119–122 (NKAE), 236–243 (GRPNAGKS), 283–287 (DTAGL), and 348–351 (SKWD). The KH-like domain occupies 406–490 (ARAKTGDLNR…PIRLFVRQGK (85 aa)).

Belongs to the TRAFAC class TrmE-Era-EngA-EngB-Septin-like GTPase superfamily. EngA (Der) GTPase family. Associates with the 50S ribosomal subunit.

GTPase that plays an essential role in the late steps of ribosome biogenesis. This chain is GTPase Der, found in Hyphomonas neptunium (strain ATCC 15444).